The primary structure comprises 861 residues: Probable linoleate 9S-lipoxygenase 7 (861 aa).

The 132-residue stretch at 29–160 (NVLDFTDLAG…NYKSDRIFFA (132 aa)) folds into the PLAT domain. One can recognise a Lipoxygenase domain in the interval 163–861 (PYLPSETPEL…GKGIPNSVSI (699 aa)). The interval 220 to 246 (TLGGSAEYPYPRRGRTGRPPTRTDPKS) is disordered. Fe cation is bound by residues H522, H527, H713, N717, and I861.

This sequence belongs to the lipoxygenase family. As to quaternary structure, monomer. Requires Fe cation as cofactor. In terms of tissue distribution, expressed in tubers. Detected in sprouts and flowers. but not in leaves or stems.

The protein resides in the cytoplasm. It catalyses the reaction (9Z,12Z)-octadecadienoate + O2 = (9S)-hydroperoxy-(10E,12Z)-octadecadienoate. Its pathway is lipid metabolism; oxylipin biosynthesis. Plant lipoxygenases may be involved in a number of diverse aspects of plant physiology including growth and development, pest resistance, and senescence or responses to wounding. Catalyzes the hydroperoxidation of lipids containing a cis,cis-1,4-pentadiene structure. The chain is Probable linoleate 9S-lipoxygenase 7 (LOX1.7) from Solanum tuberosum (Potato).